The sequence spans 361 residues: Holliday junction branch migration complex subunit RuvB (361 aa).

Positions 1–12 are enriched in acidic residues; the sequence is MNWDETGPETDE. The disordered stretch occupies residues 1–21; it reads MNWDETGPETDEPTGPVLDDR. Residues 13-199 form a large ATPase domain (RuvB-L) region; that stretch reads PTGPVLDDRL…FGFTGHMEFY (187 aa). ATP contacts are provided by residues leucine 38, arginine 39, glycine 80, lysine 83, threonine 84, threonine 85, 146-148, arginine 189, tyrosine 199, and arginine 236; that span reads EDF. Threonine 84 contacts Mg(2+). The small ATPAse domain (RuvB-S) stretch occupies residues 200–270; it reads APAELERVLH…IAMAALKVYE (71 aa). The segment at 273-361 is head domain (RuvB-H); the sequence is ARGLDRLDRA…AKGQQGLFGA (89 aa). Residues arginine 309, arginine 328, and arginine 333 each coordinate DNA.

It belongs to the RuvB family. As to quaternary structure, homohexamer. Forms an RuvA(8)-RuvB(12)-Holliday junction (HJ) complex. HJ DNA is sandwiched between 2 RuvA tetramers; dsDNA enters through RuvA and exits via RuvB. An RuvB hexamer assembles on each DNA strand where it exits the tetramer. Each RuvB hexamer is contacted by two RuvA subunits (via domain III) on 2 adjacent RuvB subunits; this complex drives branch migration. In the full resolvosome a probable DNA-RuvA(4)-RuvB(12)-RuvC(2) complex forms which resolves the HJ.

The protein resides in the cytoplasm. The enzyme catalyses ATP + H2O = ADP + phosphate + H(+). The RuvA-RuvB-RuvC complex processes Holliday junction (HJ) DNA during genetic recombination and DNA repair, while the RuvA-RuvB complex plays an important role in the rescue of blocked DNA replication forks via replication fork reversal (RFR). RuvA specifically binds to HJ cruciform DNA, conferring on it an open structure. The RuvB hexamer acts as an ATP-dependent pump, pulling dsDNA into and through the RuvAB complex. RuvB forms 2 homohexamers on either side of HJ DNA bound by 1 or 2 RuvA tetramers; 4 subunits per hexamer contact DNA at a time. Coordinated motions by a converter formed by DNA-disengaged RuvB subunits stimulates ATP hydrolysis and nucleotide exchange. Immobilization of the converter enables RuvB to convert the ATP-contained energy into a lever motion, pulling 2 nucleotides of DNA out of the RuvA tetramer per ATP hydrolyzed, thus driving DNA branch migration. The RuvB motors rotate together with the DNA substrate, which together with the progressing nucleotide cycle form the mechanistic basis for DNA recombination by continuous HJ branch migration. Branch migration allows RuvC to scan DNA until it finds its consensus sequence, where it cleaves and resolves cruciform DNA. This is Holliday junction branch migration complex subunit RuvB from Streptomyces griseus subsp. griseus (strain JCM 4626 / CBS 651.72 / NBRC 13350 / KCC S-0626 / ISP 5235).